We begin with the raw amino-acid sequence, 223 residues long: Putative 3-methyladenine DNA glycosylase (223 aa).

It belongs to the DNA glycosylase MPG family.

The sequence is that of Putative 3-methyladenine DNA glycosylase from Pseudomonas syringae pv. syringae (strain B728a).